The following is a 258-amino-acid chain: Small ribosomal subunit protein mS23 (258 aa).

The protein belongs to the mitochondrion-specific ribosomal protein mS23 family. Component of the mitochondrial small ribosomal subunit.

It localises to the mitochondrion. This is Small ribosomal subunit protein mS23 (rsm25) from Aspergillus fumigatus (strain ATCC MYA-4609 / CBS 101355 / FGSC A1100 / Af293) (Neosartorya fumigata).